The following is a 365-amino-acid chain: MAGETTQLDLSVKAVGWGAADASGTLQPIKFYRRTPGERDVKIRVLYCGVCNFDMEMVRNKWGFTRYPYVFGHETAGEVIEVGSKVQKFKVGDKVGVGCMVGSCGKCFNCQNGMENYCPEPNMADGSVYREQQGEPSFGGCSNVMVVDEKFVLRWPENLPQDTGVPLLCAGIVVYSPMKYMGLDKPGKHIGVIGLGGLGSIAVKFIKAFGGKATVISTSKRKEKEAIEEHGADAFVVNTDTEKLQALAGTMDGVVDTTPGGRTPMSLMLNLLKFDGVVLLVGAPETLFELPVQPLILGRRKIIGSSTGGLKEYQETLDFAAQHNIVCDTEVIGIDYLSTAMERIKNLDVKYRFAIDIGNTLKYED.

Cys51 provides a ligand contact to Zn(2+). Asn52 serves as a coordination point for NADP(+). Zn(2+) is bound by residues His73, Glu74, Cys104, Cys107, Cys110, Cys118, and Cys169. NADP(+) is bound by residues Leu195, Gly197, Leu198, Ser217, Thr218, Ser219, Lys222, Arg262, Val281, Ala283, Ser305, Thr307, and Arg352.

Belongs to the zinc-containing alcohol dehydrogenase family. Class-III subfamily. As to quaternary structure, homodimer. The cofactor is Zn(2+). Mainly expressed in roots and, to a lower level, in leaves.

The catalysed reaction is (19E)-geissoschizine + NADP(+) = 4,21-dehydrogeissoschizine + NADPH. Its pathway is alkaloid biosynthesis; ajmaline biosynthesis. In terms of biological role, alcohol dehydrogenase involved in the biosynthesis of ajmaline-type monoterpenoid indole alkaloids (MIAs) natural products, important plant-derived pharmaceuticals used in the therapy of heart disorders. Catalyzes iminium reduction on 4,21-dehydrogeissoschizine to produce 19E-geissoschizine, precursor of vomilenine, an intermediate chemical in the biosynthesis of ajmaline. This chain is Geissoschizine synthase, found in Rauvolfia serpentina (Serpentine wood).